A 61-amino-acid chain; its full sequence is Small ribosomal subunit protein uS14 (61 aa).

Zn(2+)-binding residues include cysteine 24, cysteine 27, cysteine 40, and cysteine 43.

The protein belongs to the universal ribosomal protein uS14 family. Zinc-binding uS14 subfamily. As to quaternary structure, part of the 30S ribosomal subunit. Contacts proteins S3 and S10. Zn(2+) serves as cofactor.

Its function is as follows. Binds 16S rRNA, required for the assembly of 30S particles and may also be responsible for determining the conformation of the 16S rRNA at the A site. The chain is Small ribosomal subunit protein uS14 from Dehalococcoides mccartyi (strain ATCC BAA-2266 / KCTC 15142 / 195) (Dehalococcoides ethenogenes (strain 195)).